The chain runs to 81 residues: ATP synthase subunit c, chloroplastic (81 aa).

The next 2 membrane-spanning stretches (helical) occupy residues 7–27 (AASV…PGIG) and 57–77 (LAFM…LLFA).

Belongs to the ATPase C chain family. F-type ATPases have 2 components, F(1) - the catalytic core - and F(0) - the membrane proton channel. F(1) has five subunits: alpha(3), beta(3), gamma(1), delta(1), epsilon(1). F(0) has four main subunits: a(1), b(1), b'(1) and c(10-14). The alpha and beta chains form an alternating ring which encloses part of the gamma chain. F(1) is attached to F(0) by a central stalk formed by the gamma and epsilon chains, while a peripheral stalk is formed by the delta, b and b' chains.

The protein resides in the plastid. Its subcellular location is the chloroplast thylakoid membrane. Its function is as follows. F(1)F(0) ATP synthase produces ATP from ADP in the presence of a proton or sodium gradient. F-type ATPases consist of two structural domains, F(1) containing the extramembraneous catalytic core and F(0) containing the membrane proton channel, linked together by a central stalk and a peripheral stalk. During catalysis, ATP synthesis in the catalytic domain of F(1) is coupled via a rotary mechanism of the central stalk subunits to proton translocation. Functionally, key component of the F(0) channel; it plays a direct role in translocation across the membrane. A homomeric c-ring of between 10-14 subunits forms the central stalk rotor element with the F(1) delta and epsilon subunits. The sequence is that of ATP synthase subunit c, chloroplastic from Cryptomeria japonica (Japanese cedar).